We begin with the raw amino-acid sequence, 600 residues long: Oligopeptide-binding protein OppA (600 aa).

Positions 1–22 are cleaved as a signal peptide; sequence MNKLKVTLLASSVVLAATLLSA. A lipid anchor (N-palmitoyl cysteine) is attached at Cys-23. Residue Cys-23 is the site of S-diacylglycerol cysteine attachment.

This sequence belongs to the bacterial solute-binding protein 5 family. In terms of assembly, the complex is composed of two ATP-binding proteins (OppD and OppF), two transmembrane proteins (OppB and OppC) and a solute-binding protein (OppA).

The protein localises to the cell membrane. Functionally, part of the ABC transporter complex OppABCDF involved in the uptake of oligopeptides. In Lactococcus lactis subsp. cremoris (strain SK11), this protein is Oligopeptide-binding protein OppA.